The following is a 382-amino-acid chain: ATP phosphoribosyltransferase regulatory subunit (382 aa).

The protein belongs to the class-II aminoacyl-tRNA synthetase family. HisZ subfamily. Heteromultimer composed of HisG and HisZ subunits.

Its subcellular location is the cytoplasm. Its pathway is amino-acid biosynthesis; L-histidine biosynthesis; L-histidine from 5-phospho-alpha-D-ribose 1-diphosphate: step 1/9. Its function is as follows. Required for the first step of histidine biosynthesis. May allow the feedback regulation of ATP phosphoribosyltransferase activity by histidine. This Burkholderia vietnamiensis (strain G4 / LMG 22486) (Burkholderia cepacia (strain R1808)) protein is ATP phosphoribosyltransferase regulatory subunit.